A 502-amino-acid polypeptide reads, in one-letter code: ATP synthase subunit alpha (502 aa).

169 to 176 (GDRQTGKT) provides a ligand contact to ATP.

The protein belongs to the ATPase alpha/beta chains family. In terms of assembly, F-type ATPases have 2 components, CF(1) - the catalytic core - and CF(0) - the membrane proton channel. CF(1) has five subunits: alpha(3), beta(3), gamma(1), delta(1), epsilon(1). CF(0) has three main subunits: a(1), b(2) and c(9-12). The alpha and beta chains form an alternating ring which encloses part of the gamma chain. CF(1) is attached to CF(0) by a central stalk formed by the gamma and epsilon chains, while a peripheral stalk is formed by the delta and b chains.

The protein resides in the cell membrane. The catalysed reaction is ATP + H2O + 4 H(+)(in) = ADP + phosphate + 5 H(+)(out). In terms of biological role, produces ATP from ADP in the presence of a proton gradient across the membrane. The alpha chain is a regulatory subunit. The protein is ATP synthase subunit alpha of Bacillus sp. (strain PS3).